A 461-amino-acid chain; its full sequence is Bifunctional protein GlmU (461 aa).

Residues methionine 1–lysine 229 form a pyrophosphorylase region. UDP-N-acetyl-alpha-D-glucosamine contacts are provided by residues leucine 11–glycine 14, lysine 25, glutamine 76, glycine 81–threonine 82, tyrosine 103–aspartate 105, glycine 140, glutamate 154, and asparagine 227. Aspartate 105 is a Mg(2+) binding site. Asparagine 227 lines the Mg(2+) pocket. Residues leucine 230–serine 250 are linker. The segment at glycine 251–glutamine 461 is N-acetyltransferase. UDP-N-acetyl-alpha-D-glucosamine-binding residues include arginine 333 and lysine 351. Histidine 363 acts as the Proton acceptor in catalysis. The UDP-N-acetyl-alpha-D-glucosamine site is built by tyrosine 366 and asparagine 377. Residues alanine 380, asparagine 386–tyrosine 387, and alanine 423 each bind acetyl-CoA.

In the N-terminal section; belongs to the N-acetylglucosamine-1-phosphate uridyltransferase family. It in the C-terminal section; belongs to the transferase hexapeptide repeat family. As to quaternary structure, homotrimer. Mg(2+) is required as a cofactor.

It localises to the cytoplasm. It catalyses the reaction alpha-D-glucosamine 1-phosphate + acetyl-CoA = N-acetyl-alpha-D-glucosamine 1-phosphate + CoA + H(+). The enzyme catalyses N-acetyl-alpha-D-glucosamine 1-phosphate + UTP + H(+) = UDP-N-acetyl-alpha-D-glucosamine + diphosphate. The protein operates within nucleotide-sugar biosynthesis; UDP-N-acetyl-alpha-D-glucosamine biosynthesis; N-acetyl-alpha-D-glucosamine 1-phosphate from alpha-D-glucosamine 6-phosphate (route II): step 2/2. It functions in the pathway nucleotide-sugar biosynthesis; UDP-N-acetyl-alpha-D-glucosamine biosynthesis; UDP-N-acetyl-alpha-D-glucosamine from N-acetyl-alpha-D-glucosamine 1-phosphate: step 1/1. Its pathway is bacterial outer membrane biogenesis; LPS lipid A biosynthesis. Its function is as follows. Catalyzes the last two sequential reactions in the de novo biosynthetic pathway for UDP-N-acetylglucosamine (UDP-GlcNAc). The C-terminal domain catalyzes the transfer of acetyl group from acetyl coenzyme A to glucosamine-1-phosphate (GlcN-1-P) to produce N-acetylglucosamine-1-phosphate (GlcNAc-1-P), which is converted into UDP-GlcNAc by the transfer of uridine 5-monophosphate (from uridine 5-triphosphate), a reaction catalyzed by the N-terminal domain. The sequence is that of Bifunctional protein GlmU from Buchnera aphidicola subsp. Schizaphis graminum (strain Sg).